The chain runs to 124 residues: UPF0337 protein blr1496 (124 aa).

The protein belongs to the UPF0337 (CsbD) family.

This is UPF0337 protein blr1496 from Bradyrhizobium diazoefficiens (strain JCM 10833 / BCRC 13528 / IAM 13628 / NBRC 14792 / USDA 110).